We begin with the raw amino-acid sequence, 495 residues long: Trimethylamine methyltransferase MttB1 (495 aa).

A non-standard amino acid (pyrrolysine) is located at residue O334.

The protein belongs to the trimethylamine methyltransferase family. In terms of assembly, can form a complex with MttC.

It carries out the reaction Co(I)-[trimethylamine-specific corrinoid protein] + trimethylamine + H(+) = methyl-Co(III)-[trimethylamine-specific corrinoid protein] + dimethylamine. The protein operates within one-carbon metabolism; methanogenesis from trimethylamine. In terms of biological role, catalyzes the transfer of a methyl group from trimethylamine to the corrinoid cofactor of MttC. The polypeptide is Trimethylamine methyltransferase MttB1 (mttB1) (Methanosarcina acetivorans (strain ATCC 35395 / DSM 2834 / JCM 12185 / C2A)).